The following is a 467-amino-acid chain: ATP synthase subunit beta (467 aa).

150 to 157 provides a ligand contact to ATP; that stretch reads GGAGVGKT.

It belongs to the ATPase alpha/beta chains family. In terms of assembly, F-type ATPases have 2 components, CF(1) - the catalytic core - and CF(0) - the membrane proton channel. CF(1) has five subunits: alpha(3), beta(3), gamma(1), delta(1), epsilon(1). CF(0) has three main subunits: a(1), b(2) and c(9-12). The alpha and beta chains form an alternating ring which encloses part of the gamma chain. CF(1) is attached to CF(0) by a central stalk formed by the gamma and epsilon chains, while a peripheral stalk is formed by the delta and b chains.

The protein resides in the cell inner membrane. It catalyses the reaction ATP + H2O + 4 H(+)(in) = ADP + phosphate + 5 H(+)(out). Produces ATP from ADP in the presence of a proton gradient across the membrane. The catalytic sites are hosted primarily by the beta subunits. This Vibrio cholerae serotype O1 (strain ATCC 39541 / Classical Ogawa 395 / O395) protein is ATP synthase subunit beta.